The sequence spans 167 residues: NADH-quinone oxidoreductase subunit I 1 (167 aa).

4Fe-4S ferredoxin-type domains lie at 58 to 88 (LRRY…IDAE) and 98 to 127 (TRYD…EGPN). Positions 68, 71, 74, 78, 107, 110, 113, and 117 each coordinate [4Fe-4S] cluster.

This sequence belongs to the complex I 23 kDa subunit family. As to quaternary structure, NDH-1 is composed of 14 different subunits. Subunits NuoA, H, J, K, L, M, N constitute the membrane sector of the complex. Requires [4Fe-4S] cluster as cofactor.

Its subcellular location is the cell inner membrane. It catalyses the reaction a quinone + NADH + 5 H(+)(in) = a quinol + NAD(+) + 4 H(+)(out). Its function is as follows. NDH-1 shuttles electrons from NADH, via FMN and iron-sulfur (Fe-S) centers, to quinones in the respiratory chain. The immediate electron acceptor for the enzyme in this species is believed to be ubiquinone. Couples the redox reaction to proton translocation (for every two electrons transferred, four hydrogen ions are translocated across the cytoplasmic membrane), and thus conserves the redox energy in a proton gradient. The polypeptide is NADH-quinone oxidoreductase subunit I 1 (Cereibacter sphaeroides (strain ATCC 17029 / ATH 2.4.9) (Rhodobacter sphaeroides)).